The following is a 288-amino-acid chain: Protoheme IX farnesyltransferase 2 (288 aa).

Transmembrane regions (helical) follow at residues 8-28 (ITKP…FFLA), 36-56 (LMLF…GCVV), 85-105 (VAFV…FQLV), 108-128 (LSAV…TMWY), 131-151 (NSVY…LVGY), 152-172 (LAVT…FCLW), 211-231 (AYVV…EAGY), 233-252 (YLAV…FRSI), and 267-287 (VSLL…IPLA).

It belongs to the UbiA prenyltransferase family. Protoheme IX farnesyltransferase subfamily.

It is found in the cell inner membrane. It catalyses the reaction heme b + (2E,6E)-farnesyl diphosphate + H2O = Fe(II)-heme o + diphosphate. It functions in the pathway porphyrin-containing compound metabolism; heme O biosynthesis; heme O from protoheme: step 1/1. Functionally, converts heme B (protoheme IX) to heme O by substitution of the vinyl group on carbon 2 of heme B porphyrin ring with a hydroxyethyl farnesyl side group. The chain is Protoheme IX farnesyltransferase 2 from Vibrio parahaemolyticus serotype O3:K6 (strain RIMD 2210633).